The chain runs to 133 residues: Large-conductance mechanosensitive channel (133 aa).

2 helical membrane passes run 19-39 (IDLA…TSLV) and 79-99 (IQSV…VKLI).

The protein belongs to the MscL family. In terms of assembly, homopentamer.

It is found in the cell membrane. Functionally, channel that opens in response to stretch forces in the membrane lipid bilayer. May participate in the regulation of osmotic pressure changes within the cell. In Clostridium tetani (strain Massachusetts / E88), this protein is Large-conductance mechanosensitive channel.